Consider the following 436-residue polypeptide: Sulfopropanediol 3-dehydrogenase (436 aa).

NAD(+) is bound by residues tyrosine 118, glutamine 180, and asparagine 203. Residues glutamine 248 and histidine 251 each contribute to the Zn(2+) site. Catalysis depends on proton acceptor residues glutamate 318 and histidine 319. Residues aspartate 352 and histidine 411 each coordinate Zn(2+).

This sequence belongs to the histidinol dehydrogenase family. HpsN subfamily. The cofactor is Zn(2+).

It carries out the reaction (2R)-3-sulfopropanediol + 2 NAD(+) + H2O = (2R)-3-sulfolactate + 2 NADH + 3 H(+). Functionally, catalyzes the NAD-dependent oxidation of (R)-2,3-dihydroxypropane-1-sulfonate to (R)-3-sulfolactate. The polypeptide is Sulfopropanediol 3-dehydrogenase (Cupriavidus pinatubonensis (strain JMP 134 / LMG 1197) (Cupriavidus necator (strain JMP 134))).